The chain runs to 302 residues: 33 kDa chaperonin (302 aa).

2 cysteine pairs are disulfide-bonded: Cys-234–Cys-236 and Cys-267–Cys-270.

The protein belongs to the HSP33 family. In terms of processing, under oxidizing conditions two disulfide bonds are formed involving the reactive cysteines. Under reducing conditions zinc is bound to the reactive cysteines and the protein is inactive.

It localises to the cytoplasm. Functionally, redox regulated molecular chaperone. Protects both thermally unfolding and oxidatively damaged proteins from irreversible aggregation. Plays an important role in the bacterial defense system toward oxidative stress. The polypeptide is 33 kDa chaperonin (Neisseria gonorrhoeae (strain ATCC 700825 / FA 1090)).